The primary structure comprises 213 residues: Octanoyltransferase (213 aa).

Residues Glu32 to Pro207 enclose the BPL/LPL catalytic domain. Residues Arg71–His78, Ser138–Gly140, and Gly151–Ala153 each bind substrate. Cys169 acts as the Acyl-thioester intermediate in catalysis.

This sequence belongs to the LipB family.

It localises to the cytoplasm. The catalysed reaction is octanoyl-[ACP] + L-lysyl-[protein] = N(6)-octanoyl-L-lysyl-[protein] + holo-[ACP] + H(+). Its pathway is protein modification; protein lipoylation via endogenous pathway; protein N(6)-(lipoyl)lysine from octanoyl-[acyl-carrier-protein]: step 1/2. Functionally, catalyzes the transfer of endogenously produced octanoic acid from octanoyl-acyl-carrier-protein onto the lipoyl domains of lipoate-dependent enzymes. Lipoyl-ACP can also act as a substrate although octanoyl-ACP is likely to be the physiological substrate. The chain is Octanoyltransferase from Salmonella typhi.